Reading from the N-terminus, the 167-residue chain is Centrin-3 (167 aa).

4 EF-hand domains span residues 25 to 60 (EQKQ…LGFD), 61 to 96 (VKKA…WILE), 98 to 133 (DPHE…LGEN), and 134 to 167 (MSDE…TGDI). Ser-135 bears the Phosphoserine mark. The Ca(2+) site is built by Asp-147, Asp-149, Asp-151, Glu-153, and Glu-158.

Belongs to the centrin family. In terms of assembly, monomer. Component of the nuclear pore complex (NPC)-associated TREX-2 complex (transcription and export complex 2), composed of at least GANP, 2 copies of ENY2, PCID2, SEM1/DSS1, and either centrin CETN2 or centrin CETN3. The TREX-2 complex also associates with ALYREF/ALY and with the nucleoporin NUP153. Interacts with USP49.

It localises to the cytoplasm. The protein localises to the cytoskeleton. Its subcellular location is the microtubule organizing center. The protein resides in the centrosome. It is found in the nucleus. It localises to the nucleolus. The protein localises to the nucleus envelope. Its subcellular location is the nuclear pore complex. The protein resides in the centriole. Plays a fundamental role in microtubule-organizing center structure and function. Its function is as follows. As a component of the TREX-2 complex, involved in the export of mRNAs to the cytoplasm through the nuclear pores. In Homo sapiens (Human), this protein is Centrin-3 (CETN3).